The primary structure comprises 1001 residues: ATP-dependent DNA/RNA helicase DHX36 (1001 aa).

The segment at 1–44 (MSYDYHQSWSRDGGPRGSGQGSSGGGGGGSRGSGGGGGGRGGRG) is required for recruitment to cytoplasmic stress granules. The segment at 1–54 (MSYDYHQSWSRDGGPRGSGQGSSGGGGGGSRGSGGGGGGRGGRGRHPAHLKGRE) is disordered. The interval 1–97 (MSYDYHQSWS…IVQLLNSVQA (97 aa)) is required for the pre-miR-134 transport. Residues 1 to 193 (MSYDYHQSWS…KKTDPRYIEM (193 aa)) are necessary for nuclear and nucleolar caps localizations. A compositionally biased stretch (gly residues) spans 15–41 (PRGSGQGSSGGGGGGSRGSGGGGGGRG). Residues 46–68 (HPAHLKGREIGLWYAKKQTQKNK) form a DSM (DHX36-specific motif) region. Positions 46-98 (HPAHLKGREIGLWYAKKQTQKNKEAERQERAVVHMDERREEQIVQLLNSVQAK) are required for G4-DNA- and G4-RNA-binding. RecA-like domain regions lie at residues 99-379 (TDKD…MIHI) and 380-621 (PGFT…DYQL). Residues 120-147 (EVSSEKKINSEKKLDNQEKKLLNQEKKT) are a coiled coil. Ser154 carries the post-translational modification Phosphoserine. A Helicase ATP-binding domain is found at 210–380 (VNLINNHQVT…FGNCPMIHIP (171 aa)). 226–231 (GCGKTT) lines the ATP pocket. The segment at 258–310 (RRISAISVAERVATERAESCGNGNSTGYQIRLQSRLPRKQGSILYCTTGIILQ) is necessary for interaction with single-stranded DNA at the 3'-end of the G4-DNA structure. Positions 327 to 330 (DEIH) match the DEAH box motif. Mg(2+) is bound by residues Glu328 and His330. In terms of domain architecture, Helicase C-terminal spans 470–640 (ALIRYIVLEE…ELCLQIKILR (171 aa)). Residues 491-550 (WDNISTLHDLLMSQVMFKSDKFLIIPLHSLMPTVNQTQVFKKTPPGVRKIVIATNIAETS) form a necessary for interaction with single-stranded DNA at the 3'-end of the G4-DNA structure region. The short motif at 510–521 (DKFLIIPLHSLM) is the Nuclear localization signal element. Residues Ser550 and 595-598 (RAGR) contribute to the ATP site. The WH domain stretch occupies residues 622–691 (PEILRTPLEE…LGVHLARLPV (70 aa)). Necessary for interaction with single-stranded DNA at the 3'-end of the G4-DNA structure stretches follow at residues 631–690 (ELCL…ARLP), 842–853 (NLGKKRKMVKVH), and 863–893 (HPKS…IYLY). The tract at residues 834 to 898 (PKVAKIRLNL…SIYLYDCTEV (65 aa)) is OB-fold-like subdomains. At Lys940 the chain carries N6-acetyllysine. Ser956 bears the Phosphoserine mark.

It belongs to the DEAD box helicase family. DEAH subfamily. Found in a multi-helicase-TICAM1 complex at least composed of DHX36, DDX1, DDX21 and TICAM1; this complex exists in resting cells with or without dsRNA poly(I:C) ligand stimulation. Interacts (via C-terminus) with TICAM1 (via TIR domain). Interacts (via C-terminus) with DDX21; this interaction serves as bridges to TICAM1. Interacts with TERT; this interaction is dependent on the ability of DHX36 to bind to the G-quadruplex RNA (G4-RNA) structure present in the telomerase RNA template component (TERC). Interacts with DKC1; this interaction is dependent on the ability of DHX36 to bind to the G4-RNA structure present in TERC. Interacts with PARN; this interaction stimulates PARN to enhance uPA mRNA decay. Interacts with EXOSC3; this interaction occurs in a RNase-insensitive manner. Interacts with EXOSC10; this interaction occurs in a RNase-insensitive manner. Interacts with ILF3; this interaction occurs in a RNA-dependent manner. Interacts with ELAVL1; this interaction occurs in an RNA-dependent manner. Interacts with DDX5; this interaction occurs in a RNA-dependent manner. Interacts with DDX17; this interaction occurs in a RNA-dependent manner. Interacts with HDAC1; this interaction occurs in a RNA-dependent manner. Interacts with HDAC3; this interaction occurs in a RNA-dependent manner. Interacts with HDAC4. Interacts with AGO1. Interacts with AGO2. Interacts with ERCC6. Requires Mg(2+) as cofactor. In terms of tissue distribution, expressed in spermatogonia stem cells and primary spermatocytes (at protein level). Expressed strongly in testis. Weakly expressed in heart, lung, liver, kidney, small intestine, spleen, lymphe node and thymus.

Its subcellular location is the nucleus. It localises to the cytoplasm. The protein resides in the cytosol. It is found in the stress granule. The protein localises to the nucleus speckle. Its subcellular location is the chromosome. It localises to the telomere. The protein resides in the mitochondrion. It is found in the perikaryon. The protein localises to the cell projection. Its subcellular location is the dendrite. It localises to the axon. The enzyme catalyses ATP + H2O = ADP + phosphate + H(+). Its activity is regulated as follows. ATPase activity is enhanced in the presence of homomeric poly(U) RNAs, but not by double-stranded DNA (dsDNA), double-stranded RNA (dsRNA) and tRNA. In terms of biological role, multifunctional ATP-dependent helicase that unwinds G-quadruplex (G4) structures. Plays a role in many biological processes such as genomic integrity, gene expression regulations and as a sensor to initiate antiviral responses. G4 structures correspond to helical structures containing guanine tetrads. Binds with high affinity to and unwinds G4 structures that are formed in nucleic acids (G4-DNA and G4-RNA). Plays a role in genomic integrity. Converts the G4-RNA structure present in telomerase RNA template component (TREC) into a double-stranded RNA to promote P1 helix formation that acts as a template boundary ensuring accurate reverse transcription. Plays a role in transcriptional regulation. Resolves G4-DNA structures in promoters of genes, such as YY1, KIT/c-kit and ALPL and positively regulates their expression. Plays a role in post-transcriptional regulation. Unwinds a G4-RNA structure located in the 3'-UTR polyadenylation site of the pre-mRNA TP53 and stimulates TP53 pre-mRNA 3'-end processing in response to ultraviolet (UV)-induced DNA damage. Binds to the precursor-microRNA-134 (pre-miR-134) terminal loop and regulates its transport into the synapto-dendritic compartment. Involved in the pre-miR-134-dependent inhibition of target gene expression and the control of dendritic spine size. Plays a role in the regulation of cytoplasmic mRNA translation and mRNA stability. Binds to both G4-RNA structures and alternative non-quadruplex-forming sequence within the 3'-UTR of the PITX1 mRNA regulating negatively PITX1 protein expression. Binds to both G4-RNA structure in the 5'-UTR and AU-rich elements (AREs) localized in the 3'-UTR of NKX2-5 mRNA to either stimulate protein translation or induce mRNA decay in an ELAVL1-dependent manner, respectively. Also binds to ARE sequences present in several mRNAs mediating exosome-mediated 3'-5' mRNA degradation. Involved in cytoplasmic urokinase-type plasminogen activator (uPA) mRNA decay. Component of a multi-helicase-TICAM1 complex that acts as a cytoplasmic sensor of viral double-stranded RNA (dsRNA) and plays a role in the activation of a cascade of antiviral responses including the induction of pro-inflammatory cytokines via the adapter molecule TICAM1. Required for the early embryonic development and hematopoiesis. Involved in the regulation of cardioblast differentiation and proliferation during heart development. Involved in spermatogonia differentiation. May play a role in ossification. This is ATP-dependent DNA/RNA helicase DHX36 from Mus musculus (Mouse).